The following is a 512-amino-acid chain: MKNIKDEWVQIALDLTSGLSSKDRFERLLSTIRNALKCDASALLLFKNQYFSPLATNGLDGDVIGRRFAISQHPRLEAIARAGDIVRFPSDSDLPDPYDGLIANEERQLQVHSCIGLPLLVNERLIGAVTIDAFDPTQFDSFTNKELRIISALAATSLHTALLMERLENQSGENSNNSSFERSPDNHVEMIGESLAMQELQANINAVANTELSVLITGETGVGKELVASALHQRSTRAQQNLVYLNCAALPESVAESELFGHVKGAFTGAISNRKGKFESADNGTLFLDEIGELSLALQAKLLRVLQYGDIQRIGDDNHIKVNTRIIAATNKTLSDEVKNGDFRADLYHRLSVFPIFVPPLRDRGNDVTLLVGYFAEKSRIKLAATSIRITPEAITLLNDYSWPGNIRELEHVISRAAVLSRAQSDDSDLVLSPTHFLIKKENHAEKNIANQIVTPHSKNTKDLRSATDEFQANLIKKTYQEQQQNWAATARALQLDTGNLHRLAKRLNLKE.

One can recognise a Sigma-54 factor interaction domain in the interval 190 to 419; it reads MIGESLAMQE…LEHVISRAAV (230 aa). ATP contacts are provided by residues 218–225 and 281–290; these read GETGVGKE and ADNGTLFLDE. A DNA-binding region (H-T-H motif) is located at residues 487–506; the sequence is WAATARALQLDTGNLHRLAK.

It functions in the pathway nitrogen metabolism; nitric oxide reduction. Its function is as follows. Required for the expression of anaerobic nitric oxide (NO) reductase, acts as a transcriptional activator for at least the norVW operon. Activation also requires sigma-54. This chain is Anaerobic nitric oxide reductase transcription regulator NorR, found in Aliivibrio fischeri (strain ATCC 700601 / ES114) (Vibrio fischeri).